Here is a 291-residue protein sequence, read N- to C-terminus: Segregation and condensation protein B (291 aa).

It belongs to the ScpB family. As to quaternary structure, homodimer. Homodimerization may be required to stabilize the binding of ScpA to the Smc head domains. Component of a cohesin-like complex composed of ScpA, ScpB and the Smc homodimer, in which ScpA and ScpB bind to the head domain of Smc. The presence of the three proteins is required for the association of the complex with DNA.

It localises to the cytoplasm. Its function is as follows. Participates in chromosomal partition during cell division. May act via the formation of a condensin-like complex containing Smc and ScpA that pull DNA away from mid-cell into both cell halves. In Mycoplasmoides gallisepticum (strain R(low / passage 15 / clone 2)) (Mycoplasma gallisepticum), this protein is Segregation and condensation protein B.